The sequence spans 804 residues: General transcription and DNA repair factor IIH helicase/translocase subunit XPB (804 aa).

2 disordered regions span residues 1–61 (MSLK…NSNE) and 220–255 (QSSK…KSSS). Over residues 14-36 (PDEDLEEYSDYSDVDNYGEEDDD) the composition is skewed to acidic residues. Low complexity-rich tracts occupy residues 47 to 60 (NNNK…TNSN) and 220 to 229 (QSSKQKSSKP). Residues 236–255 (EDKKDITNDSSKETAEKSSS) show a composition bias toward basic and acidic residues. In terms of domain architecture, Helicase ATP-binding spans 335 to 497 (MFGNGRARSG…DLNFLIGPKM (163 aa)). 348–355 (LPCGAGKT) contacts ATP. A DEVH box motif is present at residues 450–453 (DEVH). Positions 551–705 (QACQFLIDYH…KVITNLKGME (155 aa)) constitute a Helicase C-terminal domain. 2 disordered regions span residues 736–761 (DDGE…SSGS) and 782–804 (KQLK…TKRR). Over residues 784-793 (LKKDSKEHHA) the composition is skewed to basic and acidic residues. Over residues 794–804 (LFRKHLYTKRR) the composition is skewed to basic residues.

The protein belongs to the helicase family. RAD25/XPB subfamily. In terms of assembly, component of the 7-subunit TFIIH core complex composed of XPB/ptr8, XPD/rad15, ssl1, tfb1, tfb2, tfb4 and tfb5, which is active in NER. The core complex associates with the 3-subunit CTD-kinase module TFIIK composed of mcs2/cyclin H, mcs6/cdk7 and pmh1/tfb3 to form the 10-subunit holoenzyme (holo-TFIIH) active in transcription.

Its subcellular location is the nucleus. The catalysed reaction is Couples ATP hydrolysis with the unwinding of duplex DNA by translocating in the 3'-5' direction.. The enzyme catalyses ATP + H2O = ADP + phosphate + H(+). Functionally, probable ATP-dependent 3'-5' DNA helicase/translocase. Binds dsDNA rather than ssDNA, unzipping it in a translocase rather than classical helicase activity. Component of the general transcription and DNA repair factor IIH (TFIIH) core complex. When complexed to CDK-activating kinase (CAK), involved in RNA transcription by RNA polymerase II. Also involved in transcription-coupled nucleotide excision repair (NER) of damaged DNA. In NER, TFIIH acts by opening DNA around the lesion to allow the excision of the damaged oligonucleotide and its replacement by a new DNA fragment. The ATPase activity of XPB/ptr8, but not its helicase activity, is required for DNA opening. In transcription, TFIIH has an essential role in transcription initiation. When the pre-initiation complex (PIC) has been established, TFIIH is required for promoter opening and promoter escape. The ATP-dependent helicase activity of XPB/ptr8 is required for promoter escape but not for promoter opening. Plays a role in mRNA export. The sequence is that of General transcription and DNA repair factor IIH helicase/translocase subunit XPB from Schizosaccharomyces pombe (strain 972 / ATCC 24843) (Fission yeast).